Here is a 269-residue protein sequence, read N- to C-terminus: UPF0761 membrane protein NTHI0384 (269 aa).

Transmembrane regions (helical) follow at residues 32 to 52 (MLAI…FPVF), 89 to 109 (MSAV…NNID), 128 to 148 (FAIY…SIGI), 168 to 188 (LLSF…YTVV), 203 to 223 (FLAA…VVTF), and 232 to 252 (AMAT…VVLV).

The protein belongs to the UPF0761 family.

It is found in the cell inner membrane. The polypeptide is UPF0761 membrane protein NTHI0384 (Haemophilus influenzae (strain 86-028NP)).